Reading from the N-terminus, the 201-residue chain is Alpha-1-acid glycoprotein 1 (201 aa).

Residues 1-18 form the signal peptide; the sequence is MALSWVLTVLSLLPLLEA. At Q19 the chain carries Pyrrolidone carboxylic acid. Disulfide bonds link C23/C165 and C90/C183. The N-linked (GlcNAc...) (complex) asparagine glycan is linked to N33. N-linked (GlcNAc...) asparagine glycosylation occurs at N56. An N-linked (GlcNAc...) (complex) asparagine glycan is attached at N72. N93 and N103 each carry an N-linked (GlcNAc...) asparagine glycan.

The protein belongs to the calycin superfamily. Lipocalin family. Post-translationally, N-glycosylated. N-glycan heterogeneity at Asn-33: Hex5HexNAc4 (minor), Hex6HexNAc5 (major) and dHex1Hex6HexNAc5 (minor). In terms of tissue distribution, expressed by the liver and secreted in plasma.

The protein localises to the secreted. Its function is as follows. Functions as a transport protein in the blood stream. Binds various ligands in the interior of its beta-barrel domain. Also binds synthetic drugs and influences their distribution and availability in the body. Appears to function in modulating the activity of the immune system during the acute-phase reaction. The protein is Alpha-1-acid glycoprotein 1 (ORM1) of Homo sapiens (Human).